The chain runs to 678 residues: Glycine--tRNA ligase beta subunit (678 aa).

Belongs to the class-II aminoacyl-tRNA synthetase family. In terms of assembly, tetramer of two alpha and two beta subunits.

It localises to the cytoplasm. It catalyses the reaction tRNA(Gly) + glycine + ATP = glycyl-tRNA(Gly) + AMP + diphosphate. The polypeptide is Glycine--tRNA ligase beta subunit (Streptococcus pneumoniae serotype 19F (strain G54)).